The sequence spans 455 residues: Signal recognition particle 54 kDa protein (455 aa).

GTP contacts are provided by residues Gly-104–Thr-111, Asp-184–Arg-188, and Thr-242–Asp-245.

It belongs to the GTP-binding SRP family. SRP54 subfamily. In terms of assembly, part of the signal recognition particle protein translocation system, which is composed of SRP and FtsY. Archaeal SRP consists of a 7S RNA molecule of 300 nucleotides and two protein subunits: SRP54 and SRP19.

It is found in the cytoplasm. The enzyme catalyses GTP + H2O = GDP + phosphate + H(+). Its function is as follows. Involved in targeting and insertion of nascent membrane proteins into the cytoplasmic membrane. Binds to the hydrophobic signal sequence of the ribosome-nascent chain (RNC) as it emerges from the ribosomes. The SRP-RNC complex is then targeted to the cytoplasmic membrane where it interacts with the SRP receptor FtsY. This is Signal recognition particle 54 kDa protein from Thermoplasma volcanium (strain ATCC 51530 / DSM 4299 / JCM 9571 / NBRC 15438 / GSS1).